Reading from the N-terminus, the 192-residue chain is Fe/S biogenesis protein NfuA (192 aa).

Residues C150 and C153 each coordinate [4Fe-4S] cluster.

This sequence belongs to the NfuA family. Homodimer. Requires [4Fe-4S] cluster as cofactor.

In terms of biological role, involved in iron-sulfur cluster biogenesis. Binds a 4Fe-4S cluster, can transfer this cluster to apoproteins, and thereby intervenes in the maturation of Fe/S proteins. Could also act as a scaffold/chaperone for damaged Fe/S proteins. In Ruthia magnifica subsp. Calyptogena magnifica, this protein is Fe/S biogenesis protein NfuA.